The sequence spans 360 residues: Biotin synthase (360 aa).

The segment at 1 to 21 is disordered; sequence MTQLNIAPASTDTAAASNNNA. One can recognise a Radical SAM core domain in the interval 62 to 289; it reads NTVQLSTLLS…RAMVRLSAGR (228 aa). Residues C77, C81, and C84 each coordinate [4Fe-4S] cluster. 4 residues coordinate [2Fe-2S] cluster: C121, C152, C212, and R284.

The protein belongs to the radical SAM superfamily. Biotin synthase family. In terms of assembly, homodimer. Requires [4Fe-4S] cluster as cofactor. The cofactor is [2Fe-2S] cluster.

It carries out the reaction (4R,5S)-dethiobiotin + (sulfur carrier)-SH + 2 reduced [2Fe-2S]-[ferredoxin] + 2 S-adenosyl-L-methionine = (sulfur carrier)-H + biotin + 2 5'-deoxyadenosine + 2 L-methionine + 2 oxidized [2Fe-2S]-[ferredoxin]. Its pathway is cofactor biosynthesis; biotin biosynthesis; biotin from 7,8-diaminononanoate: step 2/2. Catalyzes the conversion of dethiobiotin (DTB) to biotin by the insertion of a sulfur atom into dethiobiotin via a radical-based mechanism. This is Biotin synthase from Paraburkholderia xenovorans (strain LB400).